The following is a 100-amino-acid chain: NADH-quinone oxidoreductase subunit K (100 aa).

The next 3 helical transmembrane spans lie at 4–24 (TSYYILLSALLFTLGVAGVLI), 29–49 (LVLFMSVELMLNSANLALVTF), and 60–80 (IVVFFVIVVAAAEVAVGLALL).

This sequence belongs to the complex I subunit 4L family. In terms of assembly, NDH-1 is composed of 14 different subunits. Subunits NuoA, H, J, K, L, M, N constitute the membrane sector of the complex.

The protein localises to the cell membrane. It catalyses the reaction a quinone + NADH + 5 H(+)(in) = a quinol + NAD(+) + 4 H(+)(out). Functionally, NDH-1 shuttles electrons from NADH, via FMN and iron-sulfur (Fe-S) centers, to quinones in the respiratory chain. The immediate electron acceptor for the enzyme in this species is believed to be ubiquinone. Couples the redox reaction to proton translocation (for every two electrons transferred, four hydrogen ions are translocated across the cytoplasmic membrane), and thus conserves the redox energy in a proton gradient. The chain is NADH-quinone oxidoreductase subunit K from Roseiflexus sp. (strain RS-1).